The following is a 445-amino-acid chain: Vacuolar fusion protein CCZ1 homolog (445 aa).

This sequence belongs to the CCZ1 family.

The protein is Vacuolar fusion protein CCZ1 homolog of Dictyostelium discoideum (Social amoeba).